Consider the following 104-residue polypeptide: Small ubiquitin-related modifier 3 (104 aa).

Residues K5 and K7 each participate in a glycyl lysine isopeptide (Lys-Gly) (interchain with G-Cter in SUMO2) cross-link. K11 participates in a covalent cross-link: Glycyl lysine isopeptide (Lys-Gly) (interchain with G-Cter in SUMO); alternate. K11 participates in a covalent cross-link: Glycyl lysine isopeptide (Lys-Gly) (interchain with G-Cter in SUMO2); alternate. Residues 15 to 92 (DHINLKVAGQ…IDVFQQQTGG (78 aa)) form the Ubiquitin-like domain. G92 is covalently cross-linked (Glycyl lysine isopeptide (Gly-Lys) (interchain with K-? in acceptor proteins)). The propeptide occupies 93-104 (SRVASCLLGSGL).

Belongs to the ubiquitin family. SUMO subfamily. As to quaternary structure, interacts with SAE2 and UBE2I. Covalently attached to a number of proteins. Interacts with USP25 (via ts SIM domain); the interaction sumoylates USP25 and inhibits its ubiquitin hydrolyzing activity. Interacts with BMAL1. Post-translationally, polymeric chains can be formed through Lys-11 cross-linking. Cleavage of precursor form by SENP1, SENP2 or SENP5 is necessary for function.

It is found in the cytoplasm. It localises to the nucleus. The protein localises to the PML body. Functionally, ubiquitin-like protein which can be covalently attached to target lysines either as a monomer or as a lysine-linked polymer. Does not seem to be involved in protein degradation and may function as an antagonist of ubiquitin in the degradation process. Plays a role in a number of cellular processes such as nuclear transport, DNA replication and repair, mitosis and signal transduction. Covalent attachment to its substrates requires prior activation by the E1 complex SAE1-SAE2 and linkage to the E2 enzyme UBE2I, and can be promoted by an E3 ligase such as PIAS1-4, RANBP2 or CBX4. Plays a role in the regulation of sumoylation status of SETX. This is Small ubiquitin-related modifier 3 (SUMO3) from Bos taurus (Bovine).